A 215-amino-acid chain; its full sequence is MSKVYDWFDERLEIQAIADDISSKYVPPHVNIFYCLGGITFTCFLVQVATGFAMTFYYRPTVVEAFASVQYIMTEVNFGWLIRSIHRWSASMMVLMMILHVFRVWLTGGFKKPRELTWTTGVIMAVCTVSFGVTGYSLPWDQVGYWAVKIVTGVPDAIPVVGPTIVELLRGGVGVGQATLTRFYSLHTFVLPLLTAVFMLMHFLMIRKQGISGPL.

Residues 32-52 form a helical membrane-spanning segment; that stretch reads IFYCLGGITFTCFLVQVATGF. Cys35 lines the heme c pocket. Heme b is bound by residues His86 and His100. 3 helical membrane passes run 90–110, 116–136, and 186–206; these read ASMM…TGGF, LTWT…VTGY, and LHTF…FLMI. Heme b contacts are provided by His187 and His202.

Belongs to the cytochrome b family. PetB subfamily. The 4 large subunits of the cytochrome b6-f complex are cytochrome b6, subunit IV (17 kDa polypeptide, PetD), cytochrome f and the Rieske protein, while the 4 small subunits are PetG, PetL, PetM and PetN. The complex functions as a dimer. Requires heme b as cofactor. It depends on heme c as a cofactor.

The protein localises to the plastid. The protein resides in the chloroplast thylakoid membrane. Component of the cytochrome b6-f complex, which mediates electron transfer between photosystem II (PSII) and photosystem I (PSI), cyclic electron flow around PSI, and state transitions. This chain is Cytochrome b6, found in Stigeoclonium helveticum (Green alga).